Here is a 55-residue protein sequence, read N- to C-terminus: Large ribosomal subunit protein bL33C (55 aa).

It belongs to the bacterial ribosomal protein bL33 family.

The polypeptide is Large ribosomal subunit protein bL33C (Kineococcus radiotolerans (strain ATCC BAA-149 / DSM 14245 / SRS30216)).